Reading from the N-terminus, the 184-residue chain is ATP-dependent 6-phosphofructokinase (184 aa).

The N-terminal catalytic PFK domain 1 stretch occupies residues 1 to 184; the sequence is GGDGSLTGAN…TRTTVLGHIQ (184 aa). Residue 2-5 participates in ATP binding; that stretch reads GDGS. Aspartate 3 contributes to the Mg(2+) binding site. Substrate-binding positions include 48 to 50, arginine 85, 92 to 94, glutamate 148, arginine 176, and 182 to 184; these read SID, MGR, and HIQ. Aspartate 50 functions as the Proton acceptor in the catalytic mechanism.

Belongs to the phosphofructokinase type A (PFKA) family. ATP-dependent PFK group I subfamily. Eukaryotic two domain clade 'E' sub-subfamily. Homotetramer. The cofactor is Mg(2+).

It is found in the cytoplasm. It carries out the reaction beta-D-fructose 6-phosphate + ATP = beta-D-fructose 1,6-bisphosphate + ADP + H(+). The protein operates within carbohydrate degradation; glycolysis; D-glyceraldehyde 3-phosphate and glycerone phosphate from D-glucose: step 3/4. Its activity is regulated as follows. Allosterically activated by ADP, AMP, or fructose 2,6-bisphosphate, and allosterically inhibited by ATP or citrate. Its function is as follows. Catalyzes the phosphorylation of D-fructose 6-phosphate to fructose 1,6-bisphosphate by ATP, the first committing step of glycolysis. The sequence is that of ATP-dependent 6-phosphofructokinase (PFK) from Calanus finmarchicus (Calanus tonsus).